Consider the following 278-residue polypeptide: 2,5-diketo-D-gluconic acid reductase A (278 aa).

The Proton donor role is filled by Tyr-50. A substrate-binding site is contributed by His-108. NADP(+) is bound at residue 188 to 242; the sequence is GPLGQGKYDLFGAEPVTAAAAAHGKTPAQAVLRWHLQKGFVVFPKSVRRERLEEN. The tract at residues 259 to 278 is disordered; sequence DAMDPGDGSGRVSAHPDEVD.

The protein belongs to the aldo/keto reductase family. In terms of assembly, monomer.

It is found in the cytoplasm. It carries out the reaction 2-dehydro-L-idonate + NADP(+) = 2,5-didehydro-D-gluconate + NADPH + H(+). Inhibited by Zn(2+), Fe(3+), Cu(2+) and Ni(2+). Catalyzes the reduction of 2,5-diketo-D-gluconic acid (25DKG) to 2-keto-L-gulonic acid (2KLG). 5-keto-D-fructose and dihydroxyacetone can also serve as substrates. 25DKGR-A exhibits a greater selectivity for the substrate and higher thermal stability than 25DKGR-B. The polypeptide is 2,5-diketo-D-gluconic acid reductase A (dkgA) (Corynebacterium sp. (strain ATCC 31090)).